The following is a 193-amino-acid chain: Ion-translocating oxidoreductase complex subunit B (193 aa).

The segment at 1–23 (MTFLFIVITLLALIFGAILGFAS) is hydrophobic. The 4Fe-4S domain maps to 29–87 (EADPVVEKIDAILPQSQCGQCGYPGCKPYAEAICNGDEITKCIPGGQTTIVKIAEILGV). [4Fe-4S] cluster contacts are provided by cysteine 46, cysteine 49, cysteine 54, cysteine 70, cysteine 110, cysteine 113, cysteine 116, cysteine 120, cysteine 140, cysteine 143, cysteine 146, and cysteine 150. 4Fe-4S ferredoxin-type domains follow at residues 101-130 (KVAFIDENMCIGCTKCIQACPVDAIIGTNK) and 131-160 (AMHTIIPDLCTGCELCVAPCPTDCILMIPV).

Belongs to the 4Fe4S bacterial-type ferredoxin family. RnfB subfamily. In terms of assembly, the complex is composed of six subunits: RnfA, RnfB, RnfC, RnfD, RnfE and RnfG. It depends on [4Fe-4S] cluster as a cofactor.

The protein localises to the cell inner membrane. In terms of biological role, part of a membrane-bound complex that couples electron transfer with translocation of ions across the membrane. The protein is Ion-translocating oxidoreductase complex subunit B of Haemophilus influenzae (strain 86-028NP).